A 340-amino-acid chain; its full sequence is Probable ribonucleoside hydrolase (340 aa).

Residue D14 coordinates Ca(2+). A substrate-binding site is contributed by D18. Positions 19 and 139 each coordinate Ca(2+). Substrate is bound by residues N172, E178, and N180. Catalysis depends on H259, which acts as the Proton donor. D260 serves as a coordination point for Ca(2+).

Belongs to the IUNH family. It depends on Ca(2+) as a cofactor.

It catalyses the reaction a purine D-ribonucleoside + H2O = a purine nucleobase + D-ribose. It carries out the reaction a pyrimidine ribonucleoside + H2O = a pyrimidine nucleobase + D-ribose. It functions in the pathway purine metabolism; purine nucleoside salvage. Functionally, catalyzes the hydrolysis of the N-glycosidic bond of purine and/or pyrimidine nucleosides into ribose and the base. In Dictyostelium discoideum (Social amoeba), this protein is Probable ribonucleoside hydrolase (iunH).